The sequence spans 134 residues: D-ribose pyranase (134 aa).

Residue His20 is the Proton donor of the active site. Residues Asp28, His99, and Phe123 to Asn125 each bind substrate.

This sequence belongs to the RbsD / FucU family. RbsD subfamily. In terms of assembly, homodecamer.

It localises to the cytoplasm. The enzyme catalyses beta-D-ribopyranose = beta-D-ribofuranose. Its pathway is carbohydrate metabolism; D-ribose degradation; D-ribose 5-phosphate from beta-D-ribopyranose: step 1/2. In terms of biological role, catalyzes the interconversion of beta-pyran and beta-furan forms of D-ribose. The polypeptide is D-ribose pyranase (Staphylococcus carnosus (strain TM300)).